Here is a 412-residue protein sequence, read N- to C-terminus: Citrate synthase (412 aa).

Residues histidine 305 and aspartate 364 contribute to the active site.

It belongs to the citrate synthase family.

The catalysed reaction is oxaloacetate + acetyl-CoA + H2O = citrate + CoA + H(+). Its pathway is carbohydrate metabolism; tricarboxylic acid cycle; isocitrate from oxaloacetate: step 1/2. The chain is Citrate synthase (gltA) from Rickettsia bellii.